The primary structure comprises 406 residues: Interactor protein for cytohesin exchange factors 1 (406 aa).

Residues 13–112 (HADCQGWLYK…WLNKLGFAVT (100 aa)) enclose the PH domain. Disordered stretches follow at residues 118-173 (TKDE…FSSL), 228-285 (CRVS…EDDE), and 383-406 (PQDP…ENSL). Positions 123–134 (CYSESEQEDPET) are enriched in acidic residues. The span at 144–160 (ASATSSPVAARRASSSS) shows a compositional bias: low complexity. The segment covering 228-239 (CRVSENSSTTPE) has biased composition (polar residues). Low complexity predominate over residues 243-259 (LNSLSSDDTSSLNNSQD). Over residues 272-285 (MTDRDEIKSSEDDE) the composition is skewed to basic and acidic residues. The tract at residues 285–406 (EMEKLYKSLE…TSSDCVENSL (122 aa)) is necessary for interaction with PSCD2 and to translocate to the plasma membrane. The segment covering 392–406 (EIMNPTSSDCVENSL) has biased composition (polar residues).

Interacts with guanine-nucleotide exchange factors PSCD1, PSCD2, PSCD3 and PSCD4. As to expression, expressed in brain, spleen, lung, testis and kidney.

Its subcellular location is the cytoplasm. The protein resides in the cell membrane. In terms of biological role, enhances the promotion of guanine-nucleotide exchange by PSCD2 on ARF6 in a concentration-dependent manner. The polypeptide is Interactor protein for cytohesin exchange factors 1 (Ipcef1) (Rattus norvegicus (Rat)).